The following is a 233-amino-acid chain: Putative 26S proteasome non-ATPase regulatory subunit 8 homolog B (233 aa).

Met1 bears the N-acetylmethionine mark. One can recognise a PCI domain in the interval 38 to 217 (DHYLISLSLN…APCKEIPSLQ (180 aa)).

Belongs to the proteasome subunit S14 family. In terms of assembly, component of the 19S regulatory particle (RP/PA700) lid subcomplex of the 26S proteasome. The 26S proteasome is composed of a core protease (CP), known as the 20S proteasome, capped at one or both ends by the 19S regulatory particle (RP/PA700). The RP/PA700 complex is composed of at least 17 different subunits in two subcomplexes, the base and the lid, which form the portions proximal and distal to the 20S proteolytic core, respectively. Interacts with UCH1 and UCH2.

In terms of biological role, acts as a regulatory subunit of the 26S proteasome which is involved in the ATP-dependent degradation of ubiquitinated proteins. This chain is Putative 26S proteasome non-ATPase regulatory subunit 8 homolog B, found in Arabidopsis thaliana (Mouse-ear cress).